Consider the following 956-residue polypeptide: Glycine dehydrogenase (decarboxylating) 2 (956 aa).

Lys706 carries the N6-(pyridoxal phosphate)lysine modification.

This sequence belongs to the GcvP family. In terms of assembly, the glycine cleavage system is composed of four proteins: P, T, L and H. Pyridoxal 5'-phosphate is required as a cofactor.

It carries out the reaction N(6)-[(R)-lipoyl]-L-lysyl-[glycine-cleavage complex H protein] + glycine + H(+) = N(6)-[(R)-S(8)-aminomethyldihydrolipoyl]-L-lysyl-[glycine-cleavage complex H protein] + CO2. The glycine cleavage system catalyzes the degradation of glycine. The P protein binds the alpha-amino group of glycine through its pyridoxal phosphate cofactor; CO(2) is released and the remaining methylamine moiety is then transferred to the lipoamide cofactor of the H protein. This chain is Glycine dehydrogenase (decarboxylating) 2, found in Colwellia psychrerythraea (strain 34H / ATCC BAA-681) (Vibrio psychroerythus).